We begin with the raw amino-acid sequence, 498 residues long: Pentatricopeptide repeat-containing protein At3g61360 (498 aa).

9 PPR repeats span residues 102 to 132 (TSDS…VRKD), 138 to 172 (SFKS…IFRK), 175 to 205 (GVDE…LHSR), 209 to 243 (DVKT…GFKP), 244 to 278 (NSVT…DFDI), 279 to 313 (TVQI…GLTP), 314 to 348 (DCGA…GIEP), 349 to 385 (DSVT…SLVP), and 386 to 420 (KTPT…GYCP).

This sequence belongs to the PPR family. P subfamily.

This Arabidopsis thaliana (Mouse-ear cress) protein is Pentatricopeptide repeat-containing protein At3g61360.